Consider the following 698-residue polypeptide: Polyribonucleotide nucleotidyltransferase (698 aa).

Residues D490 and D496 each coordinate Mg(2+). The region spanning 557–616 (PKVVTMTIKPDKIRDVIGPGGKKINEIIDETGVKLDIEQDGTIFIGAVDQAMINRAREII) is the KH domain. Residues 626-694 (GQTYQATVKR…KQGRVNASHR (69 aa)) form the S1 motif domain.

It belongs to the polyribonucleotide nucleotidyltransferase family. The cofactor is Mg(2+).

It localises to the cytoplasm. It catalyses the reaction RNA(n+1) + phosphate = RNA(n) + a ribonucleoside 5'-diphosphate. In terms of biological role, involved in mRNA degradation. Catalyzes the phosphorolysis of single-stranded polyribonucleotides processively in the 3'- to 5'-direction. The protein is Polyribonucleotide nucleotidyltransferase of Staphylococcus aureus (strain MSSA476).